We begin with the raw amino-acid sequence, 227 residues long: Urease accessory protein UreG (227 aa).

Residues 1-10 (MHLDHAHTHD) are compositionally biased toward basic and acidic residues. The tract at residues 1 to 22 (MHLDHAHTHDGPSAVSADAHRP) is disordered. 35 to 42 (GPVGSGKT) serves as a coordination point for GTP.

This sequence belongs to the SIMIBI class G3E GTPase family. UreG subfamily. Homodimer. UreD, UreF and UreG form a complex that acts as a GTP-hydrolysis-dependent molecular chaperone, activating the urease apoprotein by helping to assemble the nickel containing metallocenter of UreC. The UreE protein probably delivers the nickel.

The protein resides in the cytoplasm. Functionally, facilitates the functional incorporation of the urease nickel metallocenter. This process requires GTP hydrolysis, probably effectuated by UreG. The sequence is that of Urease accessory protein UreG from Streptomyces avermitilis (strain ATCC 31267 / DSM 46492 / JCM 5070 / NBRC 14893 / NCIMB 12804 / NRRL 8165 / MA-4680).